The sequence spans 358 residues: Dynein axonemal assembly factor 10 (358 aa).

WD repeat units follow at residues Glu-64–Tyr-106, Asn-116–Ala-155, Glu-163–Glu-206, Asn-208–Gly-250, Ala-258–Arg-298, and Leu-320–Leu-358.

As to quaternary structure, interacts with PIH1D1; the interaction associates DNAAF10 with the R2TP complex. Interacts with several dynein axonemal assembly factors.

It is found in the dynein axonemal particle. Functionally, key assembly factor specifically required for the stability of axonemal dynein heavy chains in cytoplasm. The polypeptide is Dynein axonemal assembly factor 10 (dnaaf10) (Xenopus laevis (African clawed frog)).